The sequence spans 84 residues: UPF0457 protein BT9727_3043 (84 aa).

This sequence belongs to the UPF0457 family.

This Bacillus thuringiensis subsp. konkukian (strain 97-27) protein is UPF0457 protein BT9727_3043.